Consider the following 196-residue polypeptide: tRNA(Phe) 7-((3-amino-3-carboxypropyl)-4-demethylwyosine(37)-N(4))-methyltransferase 1 (196 aa).

It belongs to the TYW3 family.

The enzyme catalyses 4-demethyl-7-[(3S)-3-amino-3-carboxypropyl]wyosine(37) in tRNA(Phe) + S-adenosyl-L-methionine = 7-[(3S)-3-amino-3-carboxypropyl]wyosine(37) in tRNA(Phe) + S-adenosyl-L-homocysteine + H(+). Functionally, S-adenosyl-L-methionine-dependent methyltransferase that acts as a component of the wyosine derivatives biosynthesis pathway. Probably methylates N-4 position of wybutosine-86 to produce wybutosine-72. The chain is tRNA(Phe) 7-((3-amino-3-carboxypropyl)-4-demethylwyosine(37)-N(4))-methyltransferase 1 from Pyrococcus furiosus (strain ATCC 43587 / DSM 3638 / JCM 8422 / Vc1).